The primary structure comprises 845 residues: G-type lectin S-receptor-like serine/threonine-protein kinase At1g11410 (845 aa).

The signal sequence occupies residues 1–21; it reads MKFFFIFFIFLFSFLIQSCYS. In terms of domain architecture, Bulb-type lectin spans 22–147; that stretch reads DNTILRSQSL…VTGKSFWESF (126 aa). The Extracellular segment spans residues 22 to 441; that stretch reads DNTILRSQSL…NGNGASGKKR (420 aa). N-linked (GlcNAc...) asparagine glycosylation is found at Asn-82, Asn-103, Asn-185, Asn-231, and Asn-259. One can recognise an EGF-like domain in the interval 283–321; it reads PEDKCDIYNHCGFNGYCDSTSTEKFECSCLPGYEPKTPR. 2 disulfide bridges follow: Cys-287–Cys-299 and Cys-293–Cys-309. Positions 341–424 constitute a PAN domain; the sequence is CNGKEGFAKL…SGQDFYLRVD (84 aa). 3 N-linked (GlcNAc...) asparagine glycosylation sites follow: Asn-357, Asn-366, and Asn-379. 2 disulfides stabilise this stretch: Cys-372–Cys-399 and Cys-376–Cys-382. The helical transmembrane segment at 442–462 threads the bilayer; that stretch reads LVLILISLIAVVMLLLISFHC. The Cytoplasmic portion of the chain corresponds to 463-845; it reads YLRKRRQRTQ…DVTLTDVQGR (383 aa). The Protein kinase domain maps to 523 to 808; the sequence is FAFQNKLGAG…DLPSPKHPAF (286 aa). Residues 529-537 and Lys-551 each bind ATP; that span reads LGAGGFGPV. Positions 612–629 are caM-binding; the sequence is EQRAELDWPKRMGIIRGI. Asp-648 acts as the Proton acceptor in catalysis. The tract at residues 803-845 is disordered; the sequence is PKHPAFTAGRRRNTKTGGSSDNWPSGETSSTINDVTLTDVQGR. A compositionally biased stretch (polar residues) spans 817–845; sequence KTGGSSDNWPSGETSSTINDVTLTDVQGR.

The protein belongs to the protein kinase superfamily. Ser/Thr protein kinase family.

It localises to the cell membrane. It catalyses the reaction L-seryl-[protein] + ATP = O-phospho-L-seryl-[protein] + ADP + H(+). The enzyme catalyses L-threonyl-[protein] + ATP = O-phospho-L-threonyl-[protein] + ADP + H(+). The polypeptide is G-type lectin S-receptor-like serine/threonine-protein kinase At1g11410 (Arabidopsis thaliana (Mouse-ear cress)).